A 306-amino-acid polypeptide reads, in one-letter code: Small ribosomal subunit protein uS2 (306 aa).

An N-acetylserine modification is found at Ser2. 2 laminin-binding regions span residues 161 to 180 and 205 to 229; these read IPCN…MLAR and RDPE…EYQG. [DE]-W-[ST] repeat units follow at residues 230 to 232, 245 to 247, 276 to 278, 286 to 288, and 304 to 306; these read EWT, DWS, and EWS. The tract at residues 242-306 is laminin-binding; that stretch reads EVADWSEGVQ…EWTGTTTEWS (65 aa). The tract at residues 261 to 306 is disordered; sequence PAERPEIPAAKPAAEDWSSQPASTDDWSAAPTAQASEWTGTTTEWS. Residues 277–306 are compositionally biased toward polar residues; it reads WSSQPASTDDWSAAPTAQASEWTGTTTEWS.

This sequence belongs to the universal ribosomal protein uS2 family. Monomer (37LRP) and homodimer (67LR). Component of the small ribosomal subunit. Mature ribosomes consist of a small (40S) and a large (60S) subunit. The 40S subunit contains about 33 different proteins and 1 molecule of RNA (18S). The 60S subunit contains about 49 different proteins and 3 molecules of RNA (28S, 5.8S and 5S). Interacts with rps21. Interacts with several laminins including at least lamb1. Interacts with mdk. In terms of processing, acylated. Acylation may be a prerequisite for conversion of the monomeric 37 kDa laminin receptor precursor (37LRP) to the mature dimeric 67 kDa laminin receptor (67LR), and may provide a mechanism for membrane association. Post-translationally, cleaved by stromelysin-3 (ST3) at the cell surface. Cleavage by stromelysin-3 may be a mechanism to alter cell-extracellular matrix interactions.

The protein localises to the cell membrane. It localises to the cytoplasm. It is found in the nucleus. Required for the assembly and/or stability of the 40S ribosomal subunit. Required for the processing of the 20S rRNA-precursor to mature 18S rRNA in a late step of the maturation of 40S ribosomal subunits. Also functions as a cell surface receptor for laminin. Plays a role in cell adhesion to the basement membrane and in the consequent activation of signaling transduction pathways. May play a role in cell fate determination and tissue morphogenesis. In Xenopus tropicalis (Western clawed frog), this protein is Small ribosomal subunit protein uS2 (rpsa).